Consider the following 158-residue polypeptide: MNVVQGNIESKNAKVAIVVSRFNSFVVESLLEGAVDTLKRFGQVADDNITVVRVPGAVELPLAARRVAASGKFDGIIALGAVIRGGTPHFDFVAGECNKGLAQIALEFDLPVSFGVLTTDTIEQAIERSGTKAGNKGGEAALGLLEMVNVLQELEQQL.

5-amino-6-(D-ribitylamino)uracil is bound by residues F22, 57–59 (AVE), and 81–83 (AVI). 86 to 87 (GT) is a (2S)-2-hydroxy-3-oxobutyl phosphate binding site. The active-site Proton donor is the H89. Residue F114 participates in 5-amino-6-(D-ribitylamino)uracil binding. Residue R128 coordinates (2S)-2-hydroxy-3-oxobutyl phosphate.

This sequence belongs to the DMRL synthase family. As to quaternary structure, forms an icosahedral capsid composed of 60 subunits, arranged as a dodecamer of pentamers.

The enzyme catalyses (2S)-2-hydroxy-3-oxobutyl phosphate + 5-amino-6-(D-ribitylamino)uracil = 6,7-dimethyl-8-(1-D-ribityl)lumazine + phosphate + 2 H2O + H(+). The protein operates within cofactor biosynthesis; riboflavin biosynthesis; riboflavin from 2-hydroxy-3-oxobutyl phosphate and 5-amino-6-(D-ribitylamino)uracil: step 1/2. Functionally, catalyzes the formation of 6,7-dimethyl-8-ribityllumazine by condensation of 5-amino-6-(D-ribitylamino)uracil with 3,4-dihydroxy-2-butanone 4-phosphate. This is the penultimate step in the biosynthesis of riboflavin. The chain is 6,7-dimethyl-8-ribityllumazine synthase from Shewanella loihica (strain ATCC BAA-1088 / PV-4).